The primary structure comprises 426 residues: Diaminobutyrate--2-oxoglutarate transaminase (426 aa).

Lys-274 is modified (N6-(pyridoxal phosphate)lysine).

Belongs to the class-III pyridoxal-phosphate-dependent aminotransferase family. It depends on pyridoxal 5'-phosphate as a cofactor.

The catalysed reaction is L-2,4-diaminobutanoate + 2-oxoglutarate = L-aspartate 4-semialdehyde + L-glutamate. It functions in the pathway amine and polyamine biosynthesis; ectoine biosynthesis; L-ectoine from L-aspartate 4-semialdehyde: step 1/3. Functionally, catalyzes reversively the conversion of L-aspartate beta-semialdehyde (ASA) to L-2,4-diaminobutyrate (DABA) by transamination with L-glutamate. The sequence is that of Diaminobutyrate--2-oxoglutarate transaminase (ectB) from Oceanobacillus iheyensis (strain DSM 14371 / CIP 107618 / JCM 11309 / KCTC 3954 / HTE831).